Here is a 179-residue protein sequence, read N- to C-terminus: Protein HoxT (179 aa).

The protein is Protein HoxT (hoxT) of Cupriavidus necator (strain ATCC 17699 / DSM 428 / KCTC 22496 / NCIMB 10442 / H16 / Stanier 337) (Ralstonia eutropha).